Reading from the N-terminus, the 61-residue chain is Small ribosomal subunit protein uS14 (61 aa).

Residues C24, C27, C40, and C43 each coordinate Zn(2+).

The protein belongs to the universal ribosomal protein uS14 family. Zinc-binding uS14 subfamily. Part of the 30S ribosomal subunit. Contacts proteins S3 and S10. The cofactor is Zn(2+).

Its function is as follows. Binds 16S rRNA, required for the assembly of 30S particles and may also be responsible for determining the conformation of the 16S rRNA at the A site. This is Small ribosomal subunit protein uS14 from Beutenbergia cavernae (strain ATCC BAA-8 / DSM 12333 / CCUG 43141 / JCM 11478 / NBRC 16432 / NCIMB 13614 / HKI 0122).